Here is a 622-residue protein sequence, read N- to C-terminus: Probable E3 ubiquitin-protein ligase DTX2 (622 aa).

2 WWE domains span residues 8 to 97 (SLVQ…AVRR) and 98 to 174 (HLFP…SVRR). Residues R213, R215, and R233 each carry the asymmetric dimethylarginine modification. K249 bears the N6-acetyllysine mark. Disordered regions lie at residues 249–324 (KPSL…VPMQ) and 355–393 (APQP…EPEP). R256 bears the Omega-N-methylarginine mark. Residues 274–285 (LGSQPLYRSSLS) are compositionally biased toward polar residues. Low complexity predominate over residues 299-322 (SGAVSASLPSGPSSSPGSVPATVP). S360 carries the phosphoserine modification. Over residues 372–381 (GSVKRLRKMS) the composition is skewed to basic residues. The segment at 412-473 (CIICMEKLST…DGSLQCPSCK (62 aa)) adopts an RING-type zinc-finger fold.

The protein belongs to the Deltex family. In terms of assembly, homodimer. May form a heterodimer with other members of the Deltex family. Interacts with NOTCH1.

The protein resides in the cytoplasm. It localises to the nucleus. It catalyses the reaction S-ubiquitinyl-[E2 ubiquitin-conjugating enzyme]-L-cysteine + [acceptor protein]-L-lysine = [E2 ubiquitin-conjugating enzyme]-L-cysteine + N(6)-ubiquitinyl-[acceptor protein]-L-lysine.. Its pathway is protein modification; protein ubiquitination. In terms of biological role, regulator of Notch signaling, a signaling pathway involved in cell-cell communications that regulates a broad spectrum of cell-fate determinations. Probably acts both as a positive and negative regulator of Notch, depending on the developmental and cell context. Mediates the antineural activity of Notch, possibly by inhibiting the transcriptional activation mediated by MATCH1. Functions as a ubiquitin ligase protein in vitro, suggesting that it may regulate the Notch pathway via some ubiquitin ligase activity. The polypeptide is Probable E3 ubiquitin-protein ligase DTX2 (DTX2) (Homo sapiens (Human)).